A 1191-amino-acid chain; its full sequence is MAPPVRPGMLPLLLLLLLPPLGSVPGVWSFSELFFMKEPQDATVTRKDPVVLDCQAHGEGPIKVTWLKNGAKLSENKRIQVLSNGSLYISEVEGRRGEQSDEGFYQCLAVNKYGAILSQKAHLTLSTISAFEVHPVSTEVHEGGVARFSCKISSTPPAVITWEFNRTALPTTMDRVTALPSGVLQIYDVGPEDAGNYRCVAATIAHKRKSMEASLTIVAANETRSFYMPTIIASPQNVTASLHQTVVLECMATGYPRPIISWSRLDHKSIDVFNTRVLGNGNLIISDVKLQHAGVYVCRATTPGTRNFTVAMATLTVLAPPSFVEWPESLTRPRAGTARFVCQAEGIPSPKMSWLKNGRRIHSNGRIKMYNSKLVINQIIPEDDAIYQCMAENSQGSVLSRARLTVVMSEDRPSAPYNVHAETMSSSAILLAWERPLYNSDKVIAYSVHYMKAEGLNNEEYQVVLGNDTTHYIIDDLEPDSNYTFYIVAYMPLGASQMSDHVTQNTLEDVPLRPPEISLTSRSPTDILVSWLPIPAKYRRGQVVLYRLSFRLSTENAIQVVELPGTVHEYLLEGLKPDSVYLVRITAATRVGLGESSVWTSHRTPKATSVKAPKSPELHLEPLNCTTISVRWLQDTEDPAAIRGYKLFYKEEGQQEHGPIFLDTGDLLYTLSGLDPRRKYHVRLLAYNNMEEGYQADQTVSTPGCVSVRDRMVPPPPPPHHLYAKANTSSSIFLHWRRPAFTTAQVINYTIRCNPVGLQNASLVLYLQTSETHMLVQGLEPNTKYEFAVRLHVDQLSSPWSPVVYHSTLPEAPTGPPVGVKVTLIEDDTALVSWKPPDGPETVVTRYTILYASRKAWIAGEWQVLHREGAITMALLENLVAGNVYIVKISASNEVGEGPFSNSVELAVLPKDASESNQRPKRLDSSNAKVYSGYYHLDQKSMTGIAVGVGIALTCILICVLILIYRSKARKSSASKTAQSGTQPLSQASASVAAGSDMGKNLERATETAESLVPMMPSSFIDAKGGTDLIINSYGPIIKNNTKKKWLFFQDTKKIKVEQTQRRFTQAVCFYQPGTTVLISDEDSPGSPGQTASFPRPFGATALDTEHSANSEGSHETGDSGRFSHESNDEIHLSSVISSTPPTSNPLAGGDSDGDAAPKKHGDPAQPLPAEQTSAPQTSAGLRYAAEGFPV.

The N-terminal stretch at 1–23 is a signal peptide; sequence MAPPVRPGMLPLLLLLLLPPLGS. 4 Ig-like domains span residues 24–124, 126–216, 229–316, and 321–405; these read VPGV…AHLT, STIS…ASLT, PTII…ATLT, and PSFV…ARLT. Topologically, residues 24 to 943 are extracellular; it reads VPGVWSFSEL…YYHLDQKSMT (920 aa). Disulfide bonds link C54–C107 and C150–C199. N237 is a glycosylation site (N-linked (GlcNAc...) asparagine). Cystine bridges form between C250-C298 and C342-C389. 5 consecutive Fibronectin type-III domains span residues 415-509, 511-607, 612-711, 718-811, and 816-911; these read APYN…TLED, PLRP…TPKA, APKS…VRDR, PPHH…TLPE, and PPVG…VLPK. The N-linked (GlcNAc...) asparagine glycan is linked to N624. A helical membrane pass occupies residues 944–964; sequence GIAVGVGIALTCILICVLILI. The Cytoplasmic portion of the chain corresponds to 965–1191; the sequence is YRSKARKSSA…LRYAAEGFPV (227 aa). Disordered stretches follow at residues 975–1010 and 1079–1191; these read SKTAQSGTQPLSQASASVAAGSDMGKNLERATETAE and ISDE…GFPV. Residues 977 to 990 show a composition bias toward polar residues; that stretch reads TAQSGTQPLSQASA. Over residues 1104-1132 the composition is skewed to basic and acidic residues; sequence DTEHSANSEGSHETGDSGRFSHESNDEIH. 2 stretches are compositionally biased toward polar residues: residues 1135-1146 and 1171-1180; these read SVISSTPPTSNP and EQTSAPQTSA.

It belongs to the immunoglobulin superfamily. DCC family. In terms of tissue distribution, from mid-gastrulation to early somite stages, restricted to posterior neural plate and mesoderm with an anterior limit at the level of the rhombencephalon. Posterior restriction is progressively lost during somitogenesis. Expression is maintained in the neural tube and paraxial mesoderm during this process. As development proceeds, further restricted to the dorsal parts of the spinal cord and somites. In parallel, expression progresses caudally during axis elongation.

It localises to the membrane. May play a role in anteroposterior axis elongation. The sequence is that of Protogenin from Mus musculus (Mouse).